Consider the following 452-residue polypeptide: GTPase Der (452 aa).

EngA-type G domains follow at residues 4–169 (PVVA…PPQD) and 177–352 (IQMA…EQHR). GTP is bound by residues 10–17 (GRPNVGKS), 57–61 (DTGGL), 120–123 (NKCE), 183–190 (GRPNVGKS), 230–234 (DTAGI), and 295–298 (NKWD). In terms of domain architecture, KH-like spans 353 to 438 (RRVTTAVVNE…PVRLFWRGKQ (86 aa)).

The protein belongs to the TRAFAC class TrmE-Era-EngA-EngB-Septin-like GTPase superfamily. EngA (Der) GTPase family. In terms of assembly, associates with the 50S ribosomal subunit.

In terms of biological role, GTPase that plays an essential role in the late steps of ribosome biogenesis. The protein is GTPase Der of Synechococcus sp. (strain RCC307).